The chain runs to 501 residues: Glutamate--tRNA ligase (501 aa).

The 'HIGH' region motif lies at 11–21 (PSPTGPLHIGG). A 'KMSKS' region motif is present at residues 260 to 264 (KLSKR). Lysine 263 is a binding site for ATP.

It belongs to the class-I aminoacyl-tRNA synthetase family. Glutamate--tRNA ligase type 1 subfamily. Monomer.

Its subcellular location is the cytoplasm. The enzyme catalyses tRNA(Glu) + L-glutamate + ATP = L-glutamyl-tRNA(Glu) + AMP + diphosphate. Functionally, catalyzes the attachment of glutamate to tRNA(Glu) in a two-step reaction: glutamate is first activated by ATP to form Glu-AMP and then transferred to the acceptor end of tRNA(Glu). In Flavobacterium johnsoniae (strain ATCC 17061 / DSM 2064 / JCM 8514 / BCRC 14874 / CCUG 350202 / NBRC 14942 / NCIMB 11054 / UW101) (Cytophaga johnsonae), this protein is Glutamate--tRNA ligase.